The chain runs to 83 residues: Exodeoxyribonuclease 7 small subunit (83 aa).

Belongs to the XseB family. As to quaternary structure, heterooligomer composed of large and small subunits.

The protein resides in the cytoplasm. It carries out the reaction Exonucleolytic cleavage in either 5'- to 3'- or 3'- to 5'-direction to yield nucleoside 5'-phosphates.. Functionally, bidirectionally degrades single-stranded DNA into large acid-insoluble oligonucleotides, which are then degraded further into small acid-soluble oligonucleotides. The chain is Exodeoxyribonuclease 7 small subunit from Moorella thermoacetica (strain ATCC 39073 / JCM 9320).